The primary structure comprises 527 residues: Succinate-semialdehyde dehydrogenase, mitochondrial (527 aa).

Residues 1–35 (MAMAMAMRRAAALGARHILAASSTSSSGVLLRRHM) constitute a mitochondrion transit peptide. NAD(+)-binding positions include R208, 223–226 (KPSE), and 276–281 (GSTAVG). Residue R208 participates in substrate binding. E298 (proton acceptor) is an active-site residue. Substrate-binding residues include R326, C332, and S489. C332 functions as the Nucleophile in the catalytic mechanism. C332 and C334 are joined by a disulfide.

The protein belongs to the aldehyde dehydrogenase family. In terms of assembly, homotetramer.

The protein localises to the mitochondrion matrix. It carries out the reaction succinate semialdehyde + NAD(+) + H2O = succinate + NADH + 2 H(+). The protein operates within amino-acid degradation; 4-aminobutanoate degradation. With respect to regulation, redox-regulated. Inhibited under oxydizing conditions. Oxidizes specifically succinate semialdehyde. Involved in plant response to environmental stress by preventing the accumulation of reactive oxygen species. The sequence is that of Succinate-semialdehyde dehydrogenase, mitochondrial (ALDH5F1) from Oryza sativa subsp. japonica (Rice).